The primary structure comprises 308 residues: Dioxygenase peniF (308 aa).

Residues His-144 and His-225 each coordinate Fe cation.

It belongs to the PhyH family. As to quaternary structure, homodimer. The cofactor is Fe cation.

Its function is as follows. Dioxygenase; part of the gene cluster that mediates the biosynthesis of penifulvin A, a potent insecticidal sesquiterpene that features a [5.5.5.6]dioxafenestrane ring. The first step of the pathway is performed by the sesquiterpene cyclase peniA that generates the angular triquinane scaffold silphinene via cyclization of the linear farnesyl pyrophosphate (FPP). The cytochrome P450 monooxygenase peniB and the flavin-dependent monooxygenase peniC then catalyze a series of oxidation reactions to transform silphinene into penifulvin A. The dioxygenases peniD and peniF, as well as the acetyltransferase peniE, do not seem to be involved in the biosynthesis of penifulvin A. This chain is Dioxygenase peniF, found in Penicillium patulum (Penicillium griseofulvum).